We begin with the raw amino-acid sequence, 657 residues long: Pentatricopeptide repeat-containing protein At2g37310 (657 aa).

PPR repeat units lie at residues 21–55 (DGGA…SIKP), 56–86 (DNFL…ITVR), 87–121 (NAFS…SCYS), 128–165 (DSIS…GFDS), 166–196 (DVFV…MSER), 197–232 (DVVS…DFKP), 233–267 (NGVT…HIQM), 268–298 (DLSL…MSEK), 299–333 (DSVT…GLST), 334–364 (WNAM…GSRP), 365–399 (NTVT…GADN), 400–430 (NIYV…CKDR), 431–465 (SLIA…GTKP), 466–501 (DDVT…DIEP), and 502–536 (GVEH…PIAK). Positions 537-612 (VWGALLNGAS…IPGTSWIETE (76 aa)) are type E motif. The interval 613–643 (KGLRSFIAKDSSCERSKEMYEIIEGLVESMS) is type E(+) motif.

The protein belongs to the PPR family. PCMP-E subfamily.

This Arabidopsis thaliana (Mouse-ear cress) protein is Pentatricopeptide repeat-containing protein At2g37310 (PCMP-E49).